The following is a 220-amino-acid chain: MADS-box protein AGL24 (220 aa).

An MADS-box domain is found at 1–61 (MAREKIRIKK…GKLFEFSSSR (61 aa)). The 91-residue stretch at 87-177 (LRLENCNLSR…RDKLETLERA (91 aa)) folds into the K-box domain. The span at 190-200 (SVTTNVSSYDS) shows a compositional bias: polar residues. The tract at residues 190–220 (SVTTNVSSYDSGTPLEDDSDTSLKLGLPSWE) is disordered.

Interacts with IMK3/MRLK. Forms a homodimer and heterodimer with SOC1, AP1 and SVP through MADS-box domain. Interacts with the SEU-LUG corepressor complex when complexed to AP1. Interacts with AGL15 and AGL16. Phosphorylated by IMK3. Induced by vernalization. Mostly expressed in shoot apical meristems, including floral meristems. Also detected in stems, seedlings, leaves, flowers and siliques, and, to a lower extent, in roots.

It is found in the nucleus. The protein resides in the cytoplasm. Its function is as follows. Transcription activator that mediates floral transition in response to vernalization. Promotes inflorescence fate in apical meristems. Acts in a dosage-dependent manner. Probably involved in the transduction of RLK-mediated signaling (e.g. IMK3 pathway). Together with AP1 and SVP, controls the identity of the floral meristem and regulates expression of class B, C and E genes. When associated with SOC1, mediates effect of gibberellins on flowering under short-day conditions, and regulates the expression of LEAFY (LFY), which links floral induction and floral development. Confers inflorescence characteristics to floral primordia and early flowering. The chain is MADS-box protein AGL24 (AGL24) from Arabidopsis thaliana (Mouse-ear cress).